Consider the following 482-residue polypeptide: Glutamate--tRNA ligase (482 aa).

The short motif at 9 to 19 (PSPTGPLHIGG) is the 'HIGH' region element. The 'KMSKS' region signature appears at 250–254 (KMSKR). Lys253 contacts ATP.

This sequence belongs to the class-I aminoacyl-tRNA synthetase family. Glutamate--tRNA ligase type 1 subfamily. In terms of assembly, monomer.

It localises to the cytoplasm. The catalysed reaction is tRNA(Glu) + L-glutamate + ATP = L-glutamyl-tRNA(Glu) + AMP + diphosphate. Its function is as follows. Catalyzes the attachment of glutamate to tRNA(Glu) in a two-step reaction: glutamate is first activated by ATP to form Glu-AMP and then transferred to the acceptor end of tRNA(Glu). In Desulforamulus reducens (strain ATCC BAA-1160 / DSM 100696 / MI-1) (Desulfotomaculum reducens), this protein is Glutamate--tRNA ligase.